The sequence spans 442 residues: Probable diguanylate cyclase DgcI (442 aa).

A signal peptide spans 1–23 (MSRINKFVLTVSLLIFIMISAVA). Cys24 carries the N-palmitoyl cysteine lipid modification. A lipid anchor (S-diacylglycerol cysteine) is attached at Cys24. A helical transmembrane segment spans residues 231 to 251 (LIIFFAALVAVISGASCLYLV). The GGDEF domain maps to 319–442 (KGGYLCLFDV…KNGRAQISWQ (124 aa)). Asp327 is a Mg(2+) binding site. Substrate contacts are provided by Asn335, His340, and Asp344. Asp371 contributes to the Mg(2+) binding site.

Homodimer. Mg(2+) serves as cofactor.

The protein localises to the cell membrane. It carries out the reaction 2 GTP = 3',3'-c-di-GMP + 2 diphosphate. It functions in the pathway purine metabolism; 3',5'-cyclic di-GMP biosynthesis. Its function is as follows. Catalyzes the synthesis of cyclic-di-GMP (c-di-GMP) via the condensation of 2 GTP molecules. The sequence is that of Probable diguanylate cyclase DgcI from Escherichia coli (strain K12).